A 729-amino-acid chain; its full sequence is Polyribonucleotide nucleotidyltransferase (729 aa).

Mg(2+) contacts are provided by Asp485 and Asp491. The KH domain occupies 552–611 (PRITTMKVAEDKIRTIIGKGGATIKGLIESTGVSIDIDDSGVVQLFSPDKMALEEAQKQI). Positions 621–689 (GQTYQGKVSK…KQGRVKLEWK (69 aa)) constitute an S1 motif domain.

This sequence belongs to the polyribonucleotide nucleotidyltransferase family. Component of the RNA degradosome, which is a multiprotein complex involved in RNA processing and mRNA degradation. Mg(2+) serves as cofactor.

Its subcellular location is the cytoplasm. The catalysed reaction is RNA(n+1) + phosphate = RNA(n) + a ribonucleoside 5'-diphosphate. Functionally, involved in mRNA degradation. Catalyzes the phosphorolysis of single-stranded polyribonucleotides processively in the 3'- to 5'-direction. This is Polyribonucleotide nucleotidyltransferase from Legionella pneumophila subsp. pneumophila (strain Philadelphia 1 / ATCC 33152 / DSM 7513).